The sequence spans 230 residues: Large ribosomal subunit protein uL1 (230 aa).

The protein belongs to the universal ribosomal protein uL1 family. Part of the 50S ribosomal subunit.

In terms of biological role, binds directly to 23S rRNA. The L1 stalk is quite mobile in the ribosome, and is involved in E site tRNA release. Protein L1 is also a translational repressor protein, it controls the translation of the L11 operon by binding to its mRNA. The protein is Large ribosomal subunit protein uL1 of Limosilactobacillus fermentum (strain NBRC 3956 / LMG 18251) (Lactobacillus fermentum).